Consider the following 207-residue polypeptide: ATP-dependent Clp protease proteolytic subunit (207 aa).

Residue serine 112 is the Nucleophile of the active site. Residue histidine 137 is part of the active site.

It belongs to the peptidase S14 family. In terms of assembly, fourteen ClpP subunits assemble into 2 heptameric rings which stack back to back to give a disk-like structure with a central cavity, resembling the structure of eukaryotic proteasomes.

Its subcellular location is the cytoplasm. The catalysed reaction is Hydrolysis of proteins to small peptides in the presence of ATP and magnesium. alpha-casein is the usual test substrate. In the absence of ATP, only oligopeptides shorter than five residues are hydrolyzed (such as succinyl-Leu-Tyr-|-NHMec, and Leu-Tyr-Leu-|-Tyr-Trp, in which cleavage of the -Tyr-|-Leu- and -Tyr-|-Trp bonds also occurs).. Its function is as follows. Cleaves peptides in various proteins in a process that requires ATP hydrolysis. Has a chymotrypsin-like activity. Plays a major role in the degradation of misfolded proteins. In Bacteroides fragilis (strain ATCC 25285 / DSM 2151 / CCUG 4856 / JCM 11019 / LMG 10263 / NCTC 9343 / Onslow / VPI 2553 / EN-2), this protein is ATP-dependent Clp protease proteolytic subunit.